The primary structure comprises 169 residues: MSEQKQDVAATEEQQPVLQIQRIYVKDVSFEAPNLPHIFQQEWKPKLGFDLSTETTQVGDDLYEVVLNISVETTLEDSGDVAFICEVKQAGVFTISGLEDVQMAHCLTSQCPNMLFPYARELVSNLVNRGTFPALNLSPVNFDALFVEYMNRQQAENAEEKSEEEQTKH.

The protein belongs to the SecB family. Homotetramer, a dimer of dimers. One homotetramer interacts with 1 SecA dimer.

It is found in the cytoplasm. One of the proteins required for the normal export of preproteins out of the cell cytoplasm. It is a molecular chaperone that binds to a subset of precursor proteins, maintaining them in a translocation-competent state. It also specifically binds to its receptor SecA. This chain is Protein-export protein SecB, found in Haemophilus influenzae (strain 86-028NP).